The primary structure comprises 483 residues: Cobyric acid synthase (483 aa).

The GATase cobBQ-type domain maps to 251–438 (ALIVAVPMLP…LHGIFSADRF (188 aa)). Catalysis depends on C333, which acts as the Nucleophile. The active site involves H430.

This sequence belongs to the CobB/CobQ family. CobQ subfamily.

Its pathway is cofactor biosynthesis; adenosylcobalamin biosynthesis. Functionally, catalyzes amidations at positions B, D, E, and G on adenosylcobyrinic A,C-diamide. NH(2) groups are provided by glutamine, and one molecule of ATP is hydrogenolyzed for each amidation. This chain is Cobyric acid synthase, found in Brucella abortus (strain S19).